Reading from the N-terminus, the 165-residue chain is Type II secretion system protein M (165 aa).

The Cytoplasmic segment spans residues 1–22; that stretch reads MKELLAPVQAWWRSVTPREQKM. Residues 23 to 43 traverse the membrane as a helical segment; it reads VMGMGALTVLAIAYWGIWQPL. Residues 44-165 lie on the Periplasmic side of the membrane; it reads SERTAQAQAR…VKRLQLKRGG (122 aa).

Belongs to the GSP M family. In terms of assembly, type II secretion system is composed of four main components: the outer membrane complex, the inner membrane complex, the cytoplasmic secretion ATPase and the periplasm-spanning pseudopilus. Forms homodimers. Interacts with EpsL/GspL. Interacts with EpsE/GspE. Interacts with EpsF/GspF.

Its subcellular location is the cell inner membrane. In terms of biological role, inner membrane component of the type II secretion system required for the energy-dependent secretion of extracellular factors such as proteases and toxins from the periplasm. Plays a role in the complex assembly and recruits EpsL resulting in a stable complex in the inner membrane. Provides thus a link between the energy-providing EpsE protein in the cytoplasm and the rest of the T2SS machinery. In Vibrio cholerae serotype O1 (strain ATCC 39315 / El Tor Inaba N16961), this protein is Type II secretion system protein M (epsM).